Consider the following 258-residue polypeptide: Type III pantothenate kinase (258 aa).

7 to 14 is a binding site for ATP; that stretch reads DVGNTRLK. Substrate is bound by residues Tyr96 and 103–106; that span reads GADR. Asp105 (proton acceptor) is an active-site residue. Position 133 (Thr133) interacts with ATP. Thr183 contacts substrate.

This sequence belongs to the type III pantothenate kinase family. Homodimer. It depends on NH4(+) as a cofactor. The cofactor is K(+).

It is found in the cytoplasm. The enzyme catalyses (R)-pantothenate + ATP = (R)-4'-phosphopantothenate + ADP + H(+). It participates in cofactor biosynthesis; coenzyme A biosynthesis; CoA from (R)-pantothenate: step 1/5. Catalyzes the phosphorylation of pantothenate (Pan), the first step in CoA biosynthesis. The sequence is that of Type III pantothenate kinase from Acidovorax ebreus (strain TPSY) (Diaphorobacter sp. (strain TPSY)).